Here is a 556-residue protein sequence, read N- to C-terminus: 2-succinyl-5-enolpyruvyl-6-hydroxy-3-cyclohexene-1-carboxylate synthase (556 aa).

It belongs to the TPP enzyme family. MenD subfamily. Homodimer. Mg(2+) is required as a cofactor. Mn(2+) serves as cofactor. It depends on thiamine diphosphate as a cofactor.

The catalysed reaction is isochorismate + 2-oxoglutarate + H(+) = 5-enolpyruvoyl-6-hydroxy-2-succinyl-cyclohex-3-ene-1-carboxylate + CO2. It functions in the pathway quinol/quinone metabolism; 1,4-dihydroxy-2-naphthoate biosynthesis; 1,4-dihydroxy-2-naphthoate from chorismate: step 2/7. It participates in quinol/quinone metabolism; menaquinone biosynthesis. In terms of biological role, catalyzes the thiamine diphosphate-dependent decarboxylation of 2-oxoglutarate and the subsequent addition of the resulting succinic semialdehyde-thiamine pyrophosphate anion to isochorismate to yield 2-succinyl-5-enolpyruvyl-6-hydroxy-3-cyclohexene-1-carboxylate (SEPHCHC). This is 2-succinyl-5-enolpyruvyl-6-hydroxy-3-cyclohexene-1-carboxylate synthase from Klebsiella pneumoniae (strain 342).